The following is a 596-amino-acid chain: V-type ATP synthase alpha chain (596 aa).

233–240 contacts ATP; it reads GPFGAGKT.

The protein belongs to the ATPase alpha/beta chains family.

It catalyses the reaction ATP + H2O + 4 H(+)(in) = ADP + phosphate + 5 H(+)(out). Produces ATP from ADP in the presence of a proton gradient across the membrane. The V-type alpha chain is a catalytic subunit. The polypeptide is V-type ATP synthase alpha chain (Streptococcus sanguinis (strain SK36)).